The chain runs to 620 residues: 1-deoxy-D-xylulose-5-phosphate synthase (620 aa).

Thiamine diphosphate contacts are provided by residues His80 and 121–123; that span reads GHS. Asp152 lines the Mg(2+) pocket. Thiamine diphosphate-binding positions include 153 to 154, Asn181, Tyr288, and Glu370; that span reads GA. Position 181 (Asn181) interacts with Mg(2+).

The protein belongs to the transketolase family. DXPS subfamily. Homodimer. Mg(2+) serves as cofactor. It depends on thiamine diphosphate as a cofactor.

It catalyses the reaction D-glyceraldehyde 3-phosphate + pyruvate + H(+) = 1-deoxy-D-xylulose 5-phosphate + CO2. The protein operates within metabolic intermediate biosynthesis; 1-deoxy-D-xylulose 5-phosphate biosynthesis; 1-deoxy-D-xylulose 5-phosphate from D-glyceraldehyde 3-phosphate and pyruvate: step 1/1. Catalyzes the acyloin condensation reaction between C atoms 2 and 3 of pyruvate and glyceraldehyde 3-phosphate to yield 1-deoxy-D-xylulose-5-phosphate (DXP). This Salmonella heidelberg (strain SL476) protein is 1-deoxy-D-xylulose-5-phosphate synthase.